Reading from the N-terminus, the 333-residue chain is Casein kinase II subunit alpha-3 (333 aa).

The Protein kinase domain maps to 34 to 319 (YEVVRKVGRG…AREAMDHPYF (286 aa)). ATP-binding positions include 40-48 (VGRGKYSEV) and K63. Catalysis depends on D151, which acts as the Proton acceptor.

The protein belongs to the protein kinase superfamily. Ser/Thr protein kinase family. CK2 subfamily. In terms of assembly, heterotetramer of two catalytic alpha subunits and two regulatory beta subunits.

The protein resides in the nucleus. It localises to the nucleolus. The protein localises to the cytoplasm. The catalysed reaction is L-seryl-[protein] + ATP = O-phospho-L-seryl-[protein] + ADP + H(+). It catalyses the reaction L-threonyl-[protein] + ATP = O-phospho-L-threonyl-[protein] + ADP + H(+). Functionally, casein kinases are operationally defined by their preferential utilization of acidic proteins such as caseins as substrates. The alpha chain contains the catalytic site. The tetrameric holoenzyme CK2 is composed of two alpha and two beta subunits. Acts as a circadian clock component that maintains the correct period length through phosphorylation of CCA1. The protein is Casein kinase II subunit alpha-3 of Arabidopsis thaliana (Mouse-ear cress).